Consider the following 101-residue polypeptide: Small ribosomal subunit protein uS14 (101 aa).

This sequence belongs to the universal ribosomal protein uS14 family. As to quaternary structure, part of the 30S ribosomal subunit. Contacts proteins S3 and S10.

Binds 16S rRNA, required for the assembly of 30S particles and may also be responsible for determining the conformation of the 16S rRNA at the A site. The chain is Small ribosomal subunit protein uS14 from Escherichia coli O139:H28 (strain E24377A / ETEC).